Reading from the N-terminus, the 357-residue chain is 3-isopropylmalate dehydrogenase (357 aa).

Substrate is bound by residues R99, R109, R133, and D223. Residues D223, D247, and D251 each contribute to the Mg(2+) site. Residue 283 to 295 (GSAPDIAGEQRAD) coordinates NAD(+).

It belongs to the isocitrate and isopropylmalate dehydrogenases family. LeuB type 2 subfamily. Homodimer. Mg(2+) is required as a cofactor. The cofactor is Mn(2+).

It localises to the cytoplasm. The catalysed reaction is (2R,3S)-3-isopropylmalate + NAD(+) = 4-methyl-2-oxopentanoate + CO2 + NADH. It participates in amino-acid biosynthesis; L-leucine biosynthesis; L-leucine from 3-methyl-2-oxobutanoate: step 3/4. Catalyzes the oxidation of 3-carboxy-2-hydroxy-4-methylpentanoate (3-isopropylmalate) to 3-carboxy-4-methyl-2-oxopentanoate. The product decarboxylates to 4-methyl-2 oxopentanoate. This Leifsonia xyli subsp. xyli (strain CTCB07) protein is 3-isopropylmalate dehydrogenase.